Here is a 114-residue protein sequence, read N- to C-terminus: MTRVKRGNVARKRRKKILKLASGFRGAHSRLFRVANQQVMKALRYAYNDRNKRKRDFRALWIARINASARLEGMTYSKLMGSLKKLNIILNRKSLSQLAIYDKDAFMEILKTIP.

The protein belongs to the bacterial ribosomal protein bL20 family.

The protein resides in the plastid. Its subcellular location is the cyanelle. Its function is as follows. Binds directly to 23S ribosomal RNA and is necessary for the in vitro assembly process of the 50S ribosomal subunit. It is not involved in the protein synthesizing functions of that subunit. This is Large ribosomal subunit protein bL20c (rpl20) from Cyanophora paradoxa.